Here is a 104-residue protein sequence, read N- to C-terminus: MESCITVIGERDVVLGFRLLGIQHTIIAEGKDLLKKFLEVFQNPQCNIIIVSENVKNMMDKRTLRSVEISSKPLVVFIPLPGVREEETIEEMAKRILGIDIGNV.

This sequence belongs to the V-ATPase F subunit family. As to quaternary structure, has multiple subunits with at least A(3), B(3), C, D, E, F, H, I and proteolipid K(x).

It localises to the cell membrane. Its function is as follows. Component of the A-type ATP synthase that produces ATP from ADP in the presence of a proton gradient across the membrane. This is A-type ATP synthase subunit F from Thermoplasma acidophilum (strain ATCC 25905 / DSM 1728 / JCM 9062 / NBRC 15155 / AMRC-C165).